A 111-amino-acid polypeptide reads, in one-letter code: Ig kappa chain V-III region PC 2413 (111 aa).

The framework-1 stretch occupies residues Asp-1–Cys-23. Cys-23 and Cys-92 form a disulfide bridge. The interval Arg-24 to His-38 is complementarity-determining-1. The tract at residues Trp-39–Tyr-53 is framework-2. A complementarity-determining-2 region spans residues Gly-54–Ser-60. The interval Gly-61–Cys-92 is framework-3. The tract at residues His-93–Thr-101 is complementarity-determining-3. The framework-4 stretch occupies residues Phe-102 to Glu-111.

This chain is Ig kappa chain V-III region PC 2413, found in Mus musculus (Mouse).